Reading from the N-terminus, the 334-residue chain is Beta-ketoacyl-[acyl-carrier-protein] synthase III (334 aa).

Residues Cys114 and His260 contribute to the active site. Residues 261–265 form an ACP-binding region; the sequence is QANLR. The active site involves Asn290.

This sequence belongs to the thiolase-like superfamily. FabH family. Homodimer.

It localises to the cytoplasm. The enzyme catalyses malonyl-[ACP] + acetyl-CoA + H(+) = 3-oxobutanoyl-[ACP] + CO2 + CoA. The protein operates within lipid metabolism; fatty acid biosynthesis. Its function is as follows. Catalyzes the condensation reaction of fatty acid synthesis by the addition to an acyl acceptor of two carbons from malonyl-ACP. Catalyzes the first condensation reaction which initiates fatty acid synthesis and may therefore play a role in governing the total rate of fatty acid production. Possesses both acetoacetyl-ACP synthase and acetyl transacylase activities. Its substrate specificity determines the biosynthesis of branched-chain and/or straight-chain of fatty acids. This is Beta-ketoacyl-[acyl-carrier-protein] synthase III from Clostridium tetani (strain Massachusetts / E88).